Here is a 476-residue protein sequence, read N- to C-terminus: MSYAQTKTQSKSGYQAGVKDYRLTYYTPDYTPKDTDLLAAFRMTPQPGVPPEEAGAAVAAESSTGTWTTVWTDLLTDLDRYKGRCYDIEPVPGEDNQYICYVAYPLDLFEEGSVTNVLTSIVGNVFGFKALRALRLEDIRFPVAYIKTFQGPPHGIQVERDKLNKYGRPLLGCTIKPKLGLSAKNYGRAVYECLRGGLDFTKDDENINSAPFQRWRDRFLFVAEAINKAQAETGEIKGHYLNVTAPTCEQMLQRAEYAKELKQPIIMHDYLTAGFTANTTLARWCRDNGILLHIHRAMHAVIDRQKNHGIHFRVLAKALRLSGGDHIHTGTVVGKLEGERGITMGFVDLLRENYIEQDKSRGIYFTQDWASLPGVMAVASGGIHVWHMPALVEIFGDDSVLQFGGGTLGHPWGNAPGATANRVALEAVVQARNEGRNLAREGNDIIREAAKWSPELAVACELWKEIKFEFEAMDTV.

Positions 124 and 174 each coordinate substrate. Lys176 functions as the Proton acceptor in the catalytic mechanism. Lys178 is a binding site for substrate. Mg(2+) is bound by residues Lys202, Asp204, and Glu205. Residue Lys202 is modified to N6-carboxylysine. Catalysis depends on His295, which acts as the Proton acceptor. Substrate contacts are provided by Arg296, His328, and Ser380.

The protein belongs to the RuBisCO large chain family. Type I subfamily. Heterohexadecamer of 8 large chains and 8 small chains; disulfide-linked. The disulfide link is formed within the large subunit homodimers. It depends on Mg(2+) as a cofactor. The disulfide bond which can form in the large chain dimeric partners within the hexadecamer appears to be associated with oxidative stress and protein turnover.

The protein resides in the carboxysome. The catalysed reaction is 2 (2R)-3-phosphoglycerate + 2 H(+) = D-ribulose 1,5-bisphosphate + CO2 + H2O. It carries out the reaction D-ribulose 1,5-bisphosphate + O2 = 2-phosphoglycolate + (2R)-3-phosphoglycerate + 2 H(+). In terms of biological role, ruBisCO catalyzes two reactions: the carboxylation of D-ribulose 1,5-bisphosphate, the primary event in carbon dioxide fixation, as well as the oxidative fragmentation of the pentose substrate in the photorespiration process. Both reactions occur simultaneously and in competition at the same active site. The protein is Ribulose bisphosphate carboxylase large chain of Nostoc punctiforme (strain ATCC 29133 / PCC 73102).